Consider the following 205-residue polypeptide: SREBP regulating gene protein (205 aa).

The Cytoplasmic portion of the chain corresponds to 1 to 16; the sequence is MVNLAAMVWRRLLRKR. A helical transmembrane segment spans residues 17 to 35; that stretch reads WVLALVFGLSLVYFLTSTF. The Lumenal portion of the chain corresponds to 36 to 205; that stretch reads KQEERAVRDR…GESPPELFPA (170 aa). Residue Asn-67 is glycosylated (N-linked (GlcNAc...) asparagine).

The protein belongs to the SPRING family. In terms of assembly, interacts with SCAP.

It localises to the golgi apparatus membrane. Its function is as follows. Positively regulates hepatic SREBP signaling pathway by modulating the proper localization of SCAP (SREBP cleavage-activating protein) to the endoplasmic reticulum, thereby controlling the level of functional SCAP. The polypeptide is SREBP regulating gene protein (Bos taurus (Bovine)).